A 101-amino-acid polypeptide reads, in one-letter code: NADH-quinone oxidoreductase subunit K (101 aa).

The next 3 membrane-spanning stretches (helical) occupy residues 4–24 (LEHY…GLFL), 30–50 (IVLL…LVAF), and 65–85 (FVLT…VCFF).

Belongs to the complex I subunit 4L family. In terms of assembly, NDH-1 is composed of 14 different subunits. Subunits NuoA, H, J, K, L, M, N constitute the membrane sector of the complex.

The protein resides in the cell inner membrane. It carries out the reaction a quinone + NADH + 5 H(+)(in) = a quinol + NAD(+) + 4 H(+)(out). NDH-1 shuttles electrons from NADH, via FMN and iron-sulfur (Fe-S) centers, to quinones in the respiratory chain. The immediate electron acceptor for the enzyme in this species is believed to be ubiquinone. Couples the redox reaction to proton translocation (for every two electrons transferred, four hydrogen ions are translocated across the cytoplasmic membrane), and thus conserves the redox energy in a proton gradient. The sequence is that of NADH-quinone oxidoreductase subunit K from Ruegeria pomeroyi (strain ATCC 700808 / DSM 15171 / DSS-3) (Silicibacter pomeroyi).